We begin with the raw amino-acid sequence, 557 residues long: Potassium-transporting ATPase potassium-binding subunit (557 aa).

Helical transmembrane passes span 5–25 (GFLLIATFLLVLMVLARPLGS), 63–83 (LSAILGLNMLGLAVLFFMLLG), 132–152 (GLTVQNFLSAASGIAVIFAFI), 170–190 (LLRITLWVLVPVALLIALFFI), 253–273 (FVQMLAIFLIPTALCFAFGEV), 283–303 (LLWAMSVIFVICVGVVMWAEV), 329–349 (VLVSSLFAVVTTAASCGAVIA), 356–376 (ALGGMVPMWLMQIGEVVFGGV), 379–399 (GLYGMMLFVLLAVFIAGLMIG), 416–436 (LTALAILVTPTLVLMGAALAM), 484–504 (LLAFCMFVGRFGVIIPVMAIA), and 526–546 (LFVGLLIGTVLLVGALTFIPA).

The protein belongs to the KdpA family. In terms of assembly, the system is composed of three essential subunits: KdpA, KdpB and KdpC.

It localises to the cell inner membrane. Its function is as follows. Part of the high-affinity ATP-driven potassium transport (or Kdp) system, which catalyzes the hydrolysis of ATP coupled with the electrogenic transport of potassium into the cytoplasm. This subunit binds the periplasmic potassium ions and delivers the ions to the membrane domain of KdpB through an intramembrane tunnel. This is Potassium-transporting ATPase potassium-binding subunit from Escherichia coli (strain SMS-3-5 / SECEC).